Consider the following 512-residue polypeptide: Cytochrome P450 76C1 (512 aa).

A helical transmembrane segment spans residues 3–23; that stretch reads IISGQALLLLFCFILSCFLIF. Cysteine 450 contributes to the heme binding site.

It belongs to the cytochrome P450 family. Requires heme as cofactor.

The protein resides in the membrane. The polypeptide is Cytochrome P450 76C1 (CYP76C1) (Arabidopsis thaliana (Mouse-ear cress)).